A 569-amino-acid polypeptide reads, in one-letter code: Mitogen-activated protein kinase 8 (569 aa).

Residues 13–304 (YKIQEVIGKG…AEEALADPYF (292 aa)) enclose the Protein kinase domain. ATP is bound by residues 19–27 (IGKGSYGVV) and Lys42. Asp139 (proton acceptor) is an active-site residue. Thr175 carries the post-translational modification Phosphothreonine. The TXY signature appears at 175–177 (TDY). Tyr177 carries the post-translational modification Phosphotyrosine. Positions 404–432 (TTVHSAPIPPKDHQNITSQVPQRIPGRTG) are disordered.

The protein belongs to the protein kinase superfamily. CMGC Ser/Thr protein kinase family. MAP kinase subfamily. In terms of processing, dually phosphorylated on Thr-175 and Tyr-177, which activates the enzyme. Expressed in leaves and panicles.

The catalysed reaction is L-seryl-[protein] + ATP = O-phospho-L-seryl-[protein] + ADP + H(+). It catalyses the reaction L-threonyl-[protein] + ATP = O-phospho-L-threonyl-[protein] + ADP + H(+). Activated by threonine and tyrosine phosphorylation. The protein is Mitogen-activated protein kinase 8 (MPK8) of Oryza sativa subsp. japonica (Rice).